A 437-amino-acid chain; its full sequence is Beta-1,3-galactosyl-O-glycosyl-glycoprotein beta-1,6-N-acetylglucosaminyltransferase 3 (437 aa).

The Cytoplasmic portion of the chain corresponds to 1 to 12; the sequence is MTSWQRLCWHYR. The helical; Signal-anchor for type II membrane protein transmembrane segment at 13–30 threads the bilayer; that stretch reads LWTLGCYMLLAILALKLS. The Lumenal segment spans residues 31-437; that stretch reads LRLKCDFDAM…RHKAIYGTEL (407 aa). 4 disulfides stabilise this stretch: Cys-70–Cys-227, Cys-161–Cys-381, Cys-182–Cys-209, and Cys-390–Cys-422. Asn-288 carries N-linked (GlcNAc...) asparagine glycosylation.

Belongs to the glycosyltransferase 14 family. N-glycosylated.

The protein localises to the golgi apparatus membrane. It carries out the reaction a 3-O-[beta-D-galactosyl-(1-&gt;3)-N-acetyl-alpha-D-galactosaminyl]-L-seryl-[protein] + UDP-N-acetyl-alpha-D-glucosamine = 3-O-{beta-D-galactosyl-(1-&gt;3)-[N-acetyl-beta-D-glucosaminyl-(1-&gt;6)]-N-acetyl-alpha-D-galactosaminyl}-L-seryl-[protein] + UDP + H(+). The enzyme catalyses a 3-O-[beta-D-galactosyl-(1-&gt;3)-N-acetyl-alpha-D-galactosaminyl]-L-threonyl-[protein] + UDP-N-acetyl-alpha-D-glucosamine = a 3-O-{beta-D-galactosyl-(1-&gt;3)-[N-acetyl-beta-D-glucosaminyl-(1-&gt;6)]-N-acetyl-alpha-D-galactosaminyl}-L-threonyl-[protein] + UDP + H(+). It catalyses the reaction a beta-D-Gal-(1-&gt;4)-beta-D-GlcNAc-(1-&gt;3)-beta-D-Gal-(1-&gt;4)-beta-D-GlcNAc derivative + UDP-N-acetyl-alpha-D-glucosamine = a beta-D-Gal-(1-&gt;4)-beta-D-GlcNAc-(1-&gt;3)-[beta-D-GlcNAc-(1-&gt;6)]-beta-D-Gal-(1-&gt;4)-N-acetyl-beta-D-glucosaminyl derivative + UDP + H(+). The catalysed reaction is 3-O-[N-acetyl-beta-D-glucosaminyl-(1-&gt;3)-N-acetyl-alpha-D-galactosaminyl]-L-seryl-[protein] + UDP-N-acetyl-alpha-D-glucosamine = 3-O-[N-acetyl-beta-D-glucosaminyl-(1-&gt;3)-[N-acetyl-beta-D-glucosaminyl-(1-&gt;6)]-N-acetyl-alpha-D-galactosaminyl]-L-seryl-[protein] + UDP + H(+). It carries out the reaction a 3-O-[N-acetyl-beta-D-glucosaminyl-(1-&gt;3)-N-acetyl-alpha-D-galactosaminyl]-L-threonyl-[protein] + UDP-N-acetyl-alpha-D-glucosamine = 3-O-[N-acetyl-beta-D-glucosaminyl-(1-&gt;3)-[N-acetyl-beta-D-glucosaminyl-(1-&gt;6)]-N-acetyl-alpha-D-galactosaminyl]-L-threonyl-[protein] + UDP + H(+). The protein operates within protein modification; protein glycosylation. Functionally, glycosyltransferase that can synthesize all known mucin beta 6 N-acetylglucosaminides. Mediates core 2 and core 4 O-glycan branching, 2 important steps in mucin-type biosynthesis. Also has I-branching enzyme activity by converting linear into branched poly-N-acetyllactosaminoglycans, leading to introduce the blood group I antigen during embryonic development. The chain is Beta-1,3-galactosyl-O-glycosyl-glycoprotein beta-1,6-N-acetylglucosaminyltransferase 3 (Gcnt3) from Mus musculus (Mouse).